Consider the following 841-residue polypeptide: Putative helicase R592 (841 aa).

The 238-residue stretch at 72-309 (STFVIETNSA…RRYVNKIFGQ (238 aa)) folds into the Helicase ATP-binding domain. 85-92 (DKVGAGKT) contributes to the ATP binding site. Basic residues predominate over residues 195 to 205 (KLPVKTTKKGG). Positions 195 to 215 (KLPVKTTKKGGSKTQNKAQND) are disordered. Polar residues predominate over residues 206–215 (SKTQNKAQND). Residues 266-269 (DEMD) carry the DEAD box motif. Residues 413–450 (QDVDAHENRKKNIMNNIARCKTKLESIKEKINSIKDEC) are a coiled coil. Residues 451–491 (CFICTDPFENPTIMNCCKSIFCLKCLLTTLKTVGSKCPYCR) form an RING-type; degenerate zinc finger. A Helicase C-terminal domain is found at 531-682 (VLEQVLSYIS…WMITNPTDLN (152 aa)). Residues 678-841 (PTDLNEEPDE…KAPVRKLIKV (164 aa)) are disordered. Positions 681-697 (LNEEPDEESDEGSDEDV) are enriched in acidic residues. Basic and acidic residues predominate over residues 698–725 (EKSKDKKSSDKKSSDKKKSEKKSSDKKS). Basic residues predominate over residues 726–749 (SNKKNSKKKTYVKPKSSKKTSQKV). Composition is skewed to acidic residues over residues 765–774 (DSDDLDDSDD) and 782–804 (SDSDDFGNLSDSDDLSDSDESEI). Composition is skewed to basic residues over residues 809 to 821 (KSKKTSKSSKKNK) and 828 to 841 (TLKKKAPVRKLIKV).

The polypeptide is Putative helicase R592 (Acanthamoeba polyphaga mimivirus (APMV)).